The primary structure comprises 576 residues: CTP synthase (576 aa).

Residues 305 to 559 (QIALVGKYTH…LGLVAAAANI (255 aa)) form the Glutamine amidotransferase type-1 domain. Residues cysteine 404, histidine 535, and glutamate 537 each act as for GATase activity in the active site.

The protein belongs to the CTP synthase family.

It carries out the reaction UTP + L-glutamine + ATP + H2O = CTP + L-glutamate + ADP + phosphate + 2 H(+). Its pathway is pyrimidine metabolism; CTP biosynthesis via de novo pathway; CTP from UDP: step 2/2. Catalyzes the ATP-dependent amination of UTP to CTP with either L-glutamine or ammonia as the source of nitrogen. The chain is CTP synthase (URA7) from Eremothecium gossypii (strain ATCC 10895 / CBS 109.51 / FGSC 9923 / NRRL Y-1056) (Yeast).